Reading from the N-terminus, the 87-residue chain is MRLTALVSGTVQGVGYRRYVQRHARDLGLSGSAENLPDGRVEVVAEGPPEHLERLLHWLRRGPPHARVADVQTQYSEATGLRDFHVY.

The Acylphosphatase-like domain maps to 2–87; sequence RLTALVSGTV…ATGLRDFHVY (86 aa). Catalysis depends on residues arginine 17 and asparagine 35.

This sequence belongs to the acylphosphatase family.

It carries out the reaction an acyl phosphate + H2O = a carboxylate + phosphate + H(+). This chain is Acylphosphatase (acyP), found in Deinococcus geothermalis (strain DSM 11300 / CIP 105573 / AG-3a).